The sequence spans 196 residues: Large ribosomal subunit protein eL15 (196 aa).

The tract at residues 156–196 (HRGRAERGKTSAGRKGRGMRTRGRGTEKTRPSIRSHANQGK) is disordered. A compositionally biased stretch (basic residues) spans 167–178 (AGRKGRGMRTRG).

Belongs to the eukaryotic ribosomal protein eL15 family.

The sequence is that of Large ribosomal subunit protein eL15 from Methanoregula boonei (strain DSM 21154 / JCM 14090 / 6A8).